We begin with the raw amino-acid sequence, 503 residues long: Probable cytosol aminopeptidase (503 aa).

Residues Lys274 and Asp279 each contribute to the Mn(2+) site. Residue Lys286 is part of the active site. The Mn(2+) site is built by Asp297, Asp356, and Glu358. The active site involves Arg360.

This sequence belongs to the peptidase M17 family. It depends on Mn(2+) as a cofactor.

It is found in the cytoplasm. It catalyses the reaction Release of an N-terminal amino acid, Xaa-|-Yaa-, in which Xaa is preferably Leu, but may be other amino acids including Pro although not Arg or Lys, and Yaa may be Pro. Amino acid amides and methyl esters are also readily hydrolyzed, but rates on arylamides are exceedingly low.. The enzyme catalyses Release of an N-terminal amino acid, preferentially leucine, but not glutamic or aspartic acids.. In terms of biological role, presumably involved in the processing and regular turnover of intracellular proteins. Catalyzes the removal of unsubstituted N-terminal amino acids from various peptides. The chain is Probable cytosol aminopeptidase from Burkholderia lata (strain ATCC 17760 / DSM 23089 / LMG 22485 / NCIMB 9086 / R18194 / 383).